The primary structure comprises 406 residues: Phosphorylase b kinase gamma catalytic chain, liver/testis isoform (406 aa).

One can recognise a Protein kinase domain in the interval 24 to 291 (YDPKDIIGRG…AEQALQHPFF (268 aa)). Residues 30–38 (IGRGVSSVV) and K53 each bind ATP. The Proton acceptor role is filled by D153. Positions 306 to 330 (QRFRVAVWTILAAGRVALSSHRLRP) are calmodulin-binding (domain-N). Residues 346–370 (VRRLIDNCAFRLYGHWVKKGEQQNR) form a calmodulin-binding (domain-C) region.

This sequence belongs to the protein kinase superfamily. CAMK Ser/Thr protein kinase family. In terms of assembly, hexadecamer of 4 heterotetramers, each composed of alpha, beta, gamma, and delta subunits. Alpha (PHKA1 or PHKA2) and beta (PHKB) are regulatory subunits, gamma (PHKG1 or PHKG2) is the catalytic subunit, and delta is calmodulin.

It carries out the reaction 2 ATP + phosphorylase b = 2 ADP + phosphorylase a.. Catalytic subunit of the phosphorylase b kinase (PHK), which mediates the neural and hormonal regulation of glycogen breakdown (glycogenolysis) by phosphorylating and thereby activating glycogen phosphorylase. May regulate glycogeneolysis in the testis. In vitro, phosphorylates PYGM. The protein is Phosphorylase b kinase gamma catalytic chain, liver/testis isoform (Phkg2) of Rattus norvegicus (Rat).